The following is a 65-amino-acid chain: Putative beta-neurotoxin RjAa7 (65 aa).

Residues 1–64 (KEGYPVGRDG…VWDSSTNKCG (64 aa)) enclose the LCN-type CS-alpha/beta domain. 4 disulfides stabilise this stretch: C11–C63, C15–C37, C22–C44, and C26–C46.

This sequence belongs to the long (4 C-C) scorpion toxin superfamily. Sodium channel inhibitor family. Beta subfamily. In terms of tissue distribution, expressed by the venom gland.

The protein localises to the secreted. Beta toxins bind voltage-independently at site-4 of sodium channels (Nav) and shift the voltage of activation toward more negative potentials thereby affecting sodium channel activation and promoting spontaneous and repetitive firing. The protein is Putative beta-neurotoxin RjAa7 of Rhopalurus junceus (Caribbean blue scorpion).